A 130-amino-acid chain; its full sequence is Early 3 receptor internalization and degradation beta protein (130 aa).

Positions Met-1–Cys-19 are cleaved as a signal peptide. Residues Ala-53 to Leu-77 form a helical membrane-spanning segment. Residues Tyr-122–Leu-125 are tyrosine-based sorting motif.

This sequence belongs to the adenoviridae E3_RID-beta family. Interacts with E3 RID-alpha and E3 CR1-alpha. Phosphorylated on serine. Post-translationally, O-glycosylated, but not N-glycosylated.

The protein localises to the host membrane. In terms of biological role, prevents infected cell apoptosis induced by the host immune system. Acts by down-regulating a number of cell surface receptors in the tumor necrosis factor (TNF) receptor superfamily, namely FAS, TNFRSF10A/TRAIL receptor 1, and TNFRSF10B/TRAIL receptor 2. Down-regulation of these death receptors protects adenovirus-infected cells from apoptosis induced by the death receptor ligands Fas ligand and TRAIL. RID complex also down-regulates certain tyrosine kinase cell surface receptors, especially the epidermal growth factor receptor (EGFR). RID-mediated Fas and EGFR down-regulation occurs via endocytosis of the receptors into endosomes followed by transport to and degradation within lysosomes. The polypeptide is Early 3 receptor internalization and degradation beta protein (Human adenovirus C serotype 2 (HAdV-2)).